The sequence spans 870 residues: Valine--tRNA ligase (870 aa).

Residues 1-13 (MTSQTFTTSSATP) show a composition bias toward polar residues. The segment at 1-21 (MTSQTFTTSSATPPTRGVVPD) is disordered. Positions 63-73 (PTVSGHLHPGH) match the 'HIGH' region motif. The segment at 479 to 505 (YDHPLLPDESALPVDPASQPPSGYQES) is disordered. The 'KMSKS' region signature appears at 595–599 (KMSKS). Residue lysine 598 coordinates ATP.

This sequence belongs to the class-I aminoacyl-tRNA synthetase family. ValS type 2 subfamily. Monomer.

It localises to the cytoplasm. The catalysed reaction is tRNA(Val) + L-valine + ATP = L-valyl-tRNA(Val) + AMP + diphosphate. Catalyzes the attachment of valine to tRNA(Val). As ValRS can inadvertently accommodate and process structurally similar amino acids such as threonine, to avoid such errors, it has a 'posttransfer' editing activity that hydrolyzes mischarged Thr-tRNA(Val) in a tRNA-dependent manner. The protein is Valine--tRNA ligase of Cutibacterium acnes (strain DSM 16379 / KPA171202) (Propionibacterium acnes).